Consider the following 197-residue polypeptide: 7-methyl-GTP pyrophosphatase (197 aa).

Asp-73 serves as the catalytic Proton acceptor.

It belongs to the Maf family. YceF subfamily. The cofactor is a divalent metal cation.

The protein resides in the cytoplasm. The enzyme catalyses N(7)-methyl-GTP + H2O = N(7)-methyl-GMP + diphosphate + H(+). Functionally, nucleoside triphosphate pyrophosphatase that hydrolyzes 7-methyl-GTP (m(7)GTP). May have a dual role in cell division arrest and in preventing the incorporation of modified nucleotides into cellular nucleic acids. The protein is 7-methyl-GTP pyrophosphatase of Alcanivorax borkumensis (strain ATCC 700651 / DSM 11573 / NCIMB 13689 / SK2).